Here is a 425-residue protein sequence, read N- to C-terminus: Trigger factor (425 aa).

One can recognise a PPIase FKBP-type domain in the interval 158 to 231 (GDLVRVNMEV…VEEVYKRTLP (74 aa)).

Belongs to the FKBP-type PPIase family. Tig subfamily.

It is found in the cytoplasm. The catalysed reaction is [protein]-peptidylproline (omega=180) = [protein]-peptidylproline (omega=0). Involved in protein export. Acts as a chaperone by maintaining the newly synthesized protein in an open conformation. Functions as a peptidyl-prolyl cis-trans isomerase. This is Trigger factor from Thermotoga petrophila (strain ATCC BAA-488 / DSM 13995 / JCM 10881 / RKU-1).